Here is a 357-residue protein sequence, read N- to C-terminus: MTKIAYTGGGTVGHVSVNLSLIPTSIEKGHEAFYIGSKHGIEREMIESQLPDIQYYPISSGKLRRYLSFENAKDVFKVLKGILDARKILKKQKPDLLFSKGGFVSVPVVIAARSLKIPTIIHESDLTPGLANKISLKFAKKIYTTFEDTLTYLPKDKADFVGATVREDLKQGNKERGYQLTDFDKNKKVLLVMGGSLGSKKLNNIIRQNIEALLHDYQIIHLTGKGLVDDSINKKGYVQFEFVKDDLTDLLAITDTVVSRAGSNAIYEFLSLRIPMLLIPLGLDQSRGDQIDNAKNFESKGYGRHIPEDQLTEVNLLQELNDIELHRESIIKQMETYQESYTKEDLFDKIIHDALNK.

Positions 166, 196, and 290 each coordinate UDP-N-acetyl-alpha-D-glucosamine.

Belongs to the glycosyltransferase 28 family. MurG subfamily.

Its subcellular location is the cell membrane. It carries out the reaction Mur2Ac(oyl-L-Ala-gamma-D-Glu-L-Lys-D-Ala-D-Ala)-di-trans,octa-cis-undecaprenyl diphosphate + UDP-N-acetyl-alpha-D-glucosamine = beta-D-GlcNAc-(1-&gt;4)-Mur2Ac(oyl-L-Ala-gamma-D-Glu-L-Lys-D-Ala-D-Ala)-di-trans,octa-cis-undecaprenyl diphosphate + UDP + H(+). It functions in the pathway cell wall biogenesis; peptidoglycan biosynthesis. In terms of biological role, cell wall formation. Catalyzes the transfer of a GlcNAc subunit on undecaprenyl-pyrophosphoryl-MurNAc-pentapeptide (lipid intermediate I) to form undecaprenyl-pyrophosphoryl-MurNAc-(pentapeptide)GlcNAc (lipid intermediate II). This is UDP-N-acetylglucosamine--N-acetylmuramyl-(pentapeptide) pyrophosphoryl-undecaprenol N-acetylglucosamine transferase from Staphylococcus epidermidis (strain ATCC 35984 / DSM 28319 / BCRC 17069 / CCUG 31568 / BM 3577 / RP62A).